We begin with the raw amino-acid sequence, 129 residues long: PFTFKPRQRPVFSDSRSGSVINGSNPTAERLGQQSYGISLYGFARCQRGRPKSNEDYKDVKFSIGCMGKCKRNIEQPGVLETTLKQMCATDCRDDDSSDASGPLDAALLGSLDSSRDHKPDKPVRRNSS.

Disordered stretches follow at residues 1 to 28 and 91 to 129; these read PFTF…NPTA and DCRD…RNSS. Positions 14-28 are enriched in polar residues; that stretch reads DSRSGSVINGSNPTA. The segment covering 99-113 has biased composition (low complexity); it reads DASGPLDAALLGSLD. Residues 114 to 129 show a composition bias toward basic and acidic residues; it reads SSRDHKPDKPVRRNSS.

The protein belongs to the encephalomyocarditis virus protein 2B* family.

The protein is Protein 2B* of Homo sapiens (Human).